The following is a 433-amino-acid chain: Homogentisate 1,2-dioxygenase (433 aa).

The active-site Proton acceptor is His288. The Fe cation site is built by His331 and Glu337. Homogentisate contacts are provided by Tyr346 and His367. His367 contacts Fe cation.

This sequence belongs to the homogentisate dioxygenase family. In terms of assembly, hexamer; dimer of trimers. It depends on Fe cation as a cofactor.

The enzyme catalyses homogentisate + O2 = 4-maleylacetoacetate + H(+). The protein operates within amino-acid degradation; L-phenylalanine degradation; acetoacetate and fumarate from L-phenylalanine: step 4/6. In terms of biological role, involved in the catabolism of homogentisate (2,5-dihydroxyphenylacetate or 2,5-OH-PhAc), a central intermediate in the degradation of phenylalanine and tyrosine. Catalyzes the oxidative ring cleavage of the aromatic ring of homogentisate to yield maleylacetoacetate. The protein is Homogentisate 1,2-dioxygenase of Pseudomonas putida (strain GB-1).